The following is a 424-amino-acid chain: Glutamate-1-semialdehyde 2,1-aminomutase (424 aa).

Residue lysine 268 is modified to N6-(pyridoxal phosphate)lysine.

Belongs to the class-III pyridoxal-phosphate-dependent aminotransferase family. HemL subfamily. Requires pyridoxal 5'-phosphate as cofactor.

It is found in the cytoplasm. It carries out the reaction (S)-4-amino-5-oxopentanoate = 5-aminolevulinate. It participates in porphyrin-containing compound metabolism; protoporphyrin-IX biosynthesis; 5-aminolevulinate from L-glutamyl-tRNA(Glu): step 2/2. The polypeptide is Glutamate-1-semialdehyde 2,1-aminomutase (Methanosarcina acetivorans (strain ATCC 35395 / DSM 2834 / JCM 12185 / C2A)).